We begin with the raw amino-acid sequence, 62 residues long: Short neurotoxin 1 (62 aa).

Positions 1–20 are disordered; the sequence is LECHNQQSSEPPTTTRCSGG. 4 disulfides stabilise this stretch: cysteine 3-cysteine 24, cysteine 17-cysteine 41, cysteine 43-cysteine 54, and cysteine 55-cysteine 60.

The protein belongs to the three-finger toxin family. Short-chain subfamily. Type I alpha-neurotoxin sub-subfamily. As to expression, expressed by the venom gland.

The protein localises to the secreted. Its function is as follows. Binds to muscle nicotinic acetylcholine receptor (nAChR) and inhibit acetylcholine from binding to the receptor, thereby impairing neuromuscular transmission. The protein is Short neurotoxin 1 of Naja mossambica (Mozambique spitting cobra).